The primary structure comprises 293 residues: 4-diphosphocytidyl-2-C-methyl-D-erythritol kinase (293 aa).

Lysine 16 is a catalytic residue. ATP is bound at residue 99–109; sequence PMGAGLGGGSS. Aspartate 141 is an active-site residue.

Belongs to the GHMP kinase family. IspE subfamily.

It carries out the reaction 4-CDP-2-C-methyl-D-erythritol + ATP = 4-CDP-2-C-methyl-D-erythritol 2-phosphate + ADP + H(+). It participates in isoprenoid biosynthesis; isopentenyl diphosphate biosynthesis via DXP pathway; isopentenyl diphosphate from 1-deoxy-D-xylulose 5-phosphate: step 3/6. Catalyzes the phosphorylation of the position 2 hydroxy group of 4-diphosphocytidyl-2C-methyl-D-erythritol. The protein is 4-diphosphocytidyl-2-C-methyl-D-erythritol kinase of Paraburkholderia phytofirmans (strain DSM 17436 / LMG 22146 / PsJN) (Burkholderia phytofirmans).